A 285-amino-acid chain; its full sequence is Small ribosomal subunit biogenesis GTPase RsgA (285 aa).

The CP-type G domain occupies 61-215 (KNQLIRPKVA…IIDSPGFSSF (155 aa)). Residues 110 to 113 (TKID) and 159 to 167 (GQTGVGKTS) each bind GTP. Zn(2+) is bound by residues Cys-239, Cys-244, His-246, and Cys-254.

This sequence belongs to the TRAFAC class YlqF/YawG GTPase family. RsgA subfamily. In terms of assembly, monomer. Associates with 30S ribosomal subunit, binds 16S rRNA. Zn(2+) is required as a cofactor.

It is found in the cytoplasm. Its function is as follows. One of several proteins that assist in the late maturation steps of the functional core of the 30S ribosomal subunit. Helps release RbfA from mature subunits. May play a role in the assembly of ribosomal proteins into the subunit. Circularly permuted GTPase that catalyzes slow GTP hydrolysis, GTPase activity is stimulated by the 30S ribosomal subunit. The polypeptide is Small ribosomal subunit biogenesis GTPase RsgA (Mesomycoplasma hyopneumoniae (strain 7448) (Mycoplasma hyopneumoniae)).